The primary structure comprises 363 residues: MPHAFPFLTPDQKKELSDIALKIVAKGKGILAADESTGSVAKRFQSINTENTEENRRLYRQLLFTADDRAGPCIGGVIFFHETLYQKTDAGKTFPEHVKSRGWVVGIKVDKGVVPLAGTNGETTTQGLDGLYERCAQYKKDGCDFAKWRCVLKITSTTPSRLAIMENCNVLARYASICQMHGIVPIVEPEILPDGDHDLKRTQYVTEKVLAAMYKALSDHHVYLEGTLLKPNMVTAGHSCSHKYTHQEIAMATVTALRRTVPPAVPGVTFLSGGQSEEEASINLNVMNQCPLHRPWALTFSYGRALQASALKAWGGKPGNGKAAQEEFIKRALANSLACQGKYVASGDSAAAGDSLFVANHAY.

R43 is a binding site for beta-D-fructose 1,6-bisphosphate. The active-site Proton acceptor is the E188. The active-site Schiff-base intermediate with dihydroxyacetone-P is the K230. Residues 272-274 (SGG), S301, and R304 each bind beta-D-fructose 1,6-bisphosphate.

Belongs to the class I fructose-bisphosphate aldolase family. Tetramer.

It catalyses the reaction beta-D-fructose 1,6-bisphosphate = D-glyceraldehyde 3-phosphate + dihydroxyacetone phosphate. Its pathway is carbohydrate degradation; glycolysis; D-glyceraldehyde 3-phosphate and glycerone phosphate from D-glucose: step 4/4. Its function is as follows. Plays a key role in glycolysis and gluconeogenesis. The protein is Fructose-bisphosphate aldolase A of Salmo salar (Atlantic salmon).